A 164-amino-acid polypeptide reads, in one-letter code: SsrA-binding protein (164 aa).

It belongs to the SmpB family.

It localises to the cytoplasm. In terms of biological role, required for rescue of stalled ribosomes mediated by trans-translation. Binds to transfer-messenger RNA (tmRNA), required for stable association of tmRNA with ribosomes. tmRNA and SmpB together mimic tRNA shape, replacing the anticodon stem-loop with SmpB. tmRNA is encoded by the ssrA gene; the 2 termini fold to resemble tRNA(Ala) and it encodes a 'tag peptide', a short internal open reading frame. During trans-translation Ala-aminoacylated tmRNA acts like a tRNA, entering the A-site of stalled ribosomes, displacing the stalled mRNA. The ribosome then switches to translate the ORF on the tmRNA; the nascent peptide is terminated with the 'tag peptide' encoded by the tmRNA and targeted for degradation. The ribosome is freed to recommence translation, which seems to be the essential function of trans-translation. The sequence is that of SsrA-binding protein from Synechococcus sp. (strain CC9311).